The primary structure comprises 86 residues: Beta-mammal/insect toxin To1 (86 aa).

The signal sequence occupies residues 1 to 20; that stretch reads MTRFVLFISCFFLIDMIVEC. One can recognise an LCN-type CS-alpha/beta domain in the interval 22-84; it reads KEGYLVGNDG…TWSSATNKCK (63 aa). Cystine bridges form between Cys-32-Cys-83, Cys-36-Cys-58, Cys-44-Cys-64, and Cys-48-Cys-66. Lys-84 is subject to Lysine amide.

This sequence belongs to the long (4 C-C) scorpion toxin superfamily. Sodium channel inhibitor family. Beta subfamily. In terms of tissue distribution, expressed by the venom gland.

It localises to the secreted. Beta toxin that show multiple effects. It enhances the open probability at more negative potentials of human Nav1.3/SCN3A and Nav1.6/SCN8A, of the insect channel BgNaV1 and of arachnid VdNaV1 channel. It promotes an important shift in slow inactivation processes as a function of the prepulse voltage in human Nav1.3/SCN3A and Nav1.6/SCN8A and a small shift in Nav1.1/SCN1A, Nav1.2/SCN2A and Nav1.4/SCN4A. Finally, it reduces the peak of sodium currents in Nav1.3/SCN3A (80% inhibition at 70 nM of toxin), Nav1.6/SCN8A (55.3%), Nav1.1/SCN1A (53.3%), Nav1.5/SCN5A (46.7%), Nav1.2/SCN2A (42.7%) and Nav1.4/SCN4A (20%) voltage-gated sodium channels. It has also been shown to affect the sodium current permeability of rat cerebellum granular cells in a partially reversible manner. In vivo, an intraperitoneal injection (20 ug) into mice produces excitability, respiratory problems, convulsions and death, within the first 30 minutes after injection. This chain is Beta-mammal/insect toxin To1, found in Tityus obscurus (Amazonian scorpion).